Reading from the N-terminus, the 742-residue chain is uncharacterized protein (742 aa).

The disordered stretch occupies residues 167 to 471 (GIVPPEPWGH…AAGAAGGGGA (305 aa)). Residues 205–218 (PAPPPSLFAPPPPS) show a composition bias toward pro residues. Polar residues-rich tracts occupy residues 318-331 (SPATSNEISSNAVS) and 358-368 (GSPQTLSTAPS). Positions 386–401 (TAGPAAPPTTGGPPAP) are enriched in pro residues. Over residues 421 to 432 (PLSGGVPGGAVP) the composition is skewed to low complexity. Pro residues predominate over residues 433–447 (LGPPPTPPPAAPVTT). Low complexity predominate over residues 448–464 (PPLASGAPVAPTGAAAG).

May be involved in the ESX-1 / type VII specialized secretion system (T7SS), which exports several proteins including EsxA and EsxB. Involved in DNA conjugation in the recipient strain. This is an uncharacterized protein from Mycolicibacterium smegmatis (strain MKD8) (Mycobacterium smegmatis).